The following is a 333-amino-acid chain: D-fructose 1,6-bisphosphatase class 2/sedoheptulose 1,7-bisphosphatase (333 aa).

Mn(2+) contacts are provided by Asp33, Glu57, Asp85, and Glu88. Substrate-binding positions include 88–90 (EGT), Tyr119, 164–166 (RAR), and 186–188 (DGD). Glu213 is a binding site for Mn(2+).

Belongs to the FBPase class 2 family. As to quaternary structure, homotetramer. Requires Mn(2+) as cofactor.

The enzyme catalyses beta-D-fructose 1,6-bisphosphate + H2O = beta-D-fructose 6-phosphate + phosphate. The catalysed reaction is D-sedoheptulose 1,7-bisphosphate + H2O = D-sedoheptulose 7-phosphate + phosphate. Its pathway is carbohydrate biosynthesis; Calvin cycle. In terms of biological role, catalyzes the hydrolysis of fructose 1,6-bisphosphate (Fru 1,6-P2) and sedoheptulose 1,7-bisphosphate (Sed 1,7-P2) to fructose 6-phosphate and sedoheptulose 7-phosphate, respectively. The sequence is that of D-fructose 1,6-bisphosphatase class 2/sedoheptulose 1,7-bisphosphatase from Prochlorococcus marinus (strain MIT 9515).